The chain runs to 64 residues: Large ribosomal subunit protein bL35 (64 aa).

Basic residues predominate over residues 1-17; sequence MKQKTHSGIKKRIKKTG. Residues 1-64 form a disordered region; the sequence is MKQKTHSGIK…KRVNRLLGEG (64 aa). Basic and acidic residues predominate over residues 21 to 33; sequence LRREQANRRHLLE.

It belongs to the bacterial ribosomal protein bL35 family.

The sequence is that of Large ribosomal subunit protein bL35 from Corynebacterium kroppenstedtii (strain DSM 44385 / JCM 11950 / CIP 105744 / CCUG 35717).